The chain runs to 319 residues: Biotin synthase (319 aa).

The Radical SAM core domain maps to 44 to 273; it reads IHGDGIDLCS…EAKIRLAGGR (230 aa). 3 residues coordinate [4Fe-4S] cluster: Cys62, Cys66, and Cys69. [2Fe-2S] cluster-binding residues include Ser106, Cys138, Cys198, and Arg268.

This sequence belongs to the radical SAM superfamily. Biotin synthase family. Homodimer. [4Fe-4S] cluster serves as cofactor. [2Fe-2S] cluster is required as a cofactor.

The enzyme catalyses (4R,5S)-dethiobiotin + (sulfur carrier)-SH + 2 reduced [2Fe-2S]-[ferredoxin] + 2 S-adenosyl-L-methionine = (sulfur carrier)-H + biotin + 2 5'-deoxyadenosine + 2 L-methionine + 2 oxidized [2Fe-2S]-[ferredoxin]. The protein operates within cofactor biosynthesis; biotin biosynthesis; biotin from 7,8-diaminononanoate: step 2/2. Functionally, catalyzes the conversion of dethiobiotin (DTB) to biotin by the insertion of a sulfur atom into dethiobiotin via a radical-based mechanism. The protein is Biotin synthase of Clostridium perfringens (strain 13 / Type A).